The chain runs to 269 residues: 3-deoxy-manno-octulosonate cytidylyltransferase (269 aa).

The protein belongs to the KdsB family.

The protein localises to the cytoplasm. It catalyses the reaction 3-deoxy-alpha-D-manno-oct-2-ulosonate + CTP = CMP-3-deoxy-beta-D-manno-octulosonate + diphosphate. The protein operates within nucleotide-sugar biosynthesis; CMP-3-deoxy-D-manno-octulosonate biosynthesis; CMP-3-deoxy-D-manno-octulosonate from 3-deoxy-D-manno-octulosonate and CTP: step 1/1. It participates in bacterial outer membrane biogenesis; lipopolysaccharide biosynthesis. Activates KDO (a required 8-carbon sugar) for incorporation into bacterial lipopolysaccharide in Gram-negative bacteria. The chain is 3-deoxy-manno-octulosonate cytidylyltransferase from Cupriavidus pinatubonensis (strain JMP 134 / LMG 1197) (Cupriavidus necator (strain JMP 134)).